The sequence spans 493 residues: MQKIKLTGLSLIISGLLMAQAQAAEPVYPDQLRLFSLGQGVCGDKYRPVNREEAQSVKSNIVGMMGQWQISGLANGWVIMGPGYNGEIKPGTASNTWCYPTNPVTGEIPTLSALDIPDGDEVDVQWRLVHDSANFIKPTSYLAHYLGYAWVGGNHSQYVGEDMDVTRDGDGWVIRGNNDGGCDGYRCGDKTAIKVSNFAYNLDPDSFKHGDVTQSDRQLVKTVVGWAVNDSDTPQSGYDVTLRYDTATNWSKTNTYGLSEKVTTKNKFKWPLVGETELSIEIAANQSWASQNGGSTTTSLSQSVRPTVPARSKIPVKIELYKADISYPYEFKADVSYDLTLSGFLRWGGNAWYTHPDNRPNWNHTFVIGPYKDKASSIRYQWDKRYIPGEVKWWDWNWTIQQNGLSTMQNNLARVLRPVRAGITGDFSAESQFAGNIEIGAPVPLAADSKVRRARSVDGAGQGLRLEIPLDAQELSGLGFNNVSLSVTPAANQ.

The signal sequence occupies residues 1–23 (MQKIKLTGLSLIISGLLMAQAQA). Intrachain disulfides connect C42–C98 and C182–C187. The interval 68-84 (WQISGLANGWVIMGPGY) is interaction with host N-linked glycan. Residues 256-288 (YGLSEKVTTKNKFKWPLVGETELSIEIAANQSW) are part of the transmembrane beta-barrel after proteolytic activation of the toxin and insertion into the host membrane. Residues 346-355 (RWGGNAWYTH) are interaction with glycans from host GPI-anchor. The propeptide occupies 446-493 (AADSKVRRARSVDGAGQGLRLEIPLDAQELSGLGFNNVSLSVTPAANQ).

This sequence belongs to the aerolysin family. Homodimer in solution; homoheptamer in the host membrane. After binding to GPI-anchored proteins in target membranes and proteolytic removal of the C-terminal propeptide, the protein assembles into a heptameric pre-pore complex. A further conformation change leads to insertion into the host membrane. Post-translationally, proteolytic cleavage and subsequent release of the propeptide trigger a major conformation change, leading to the formation of a heptameric pre-pore that then inserts into the host membrane.

It is found in the secreted. Its subcellular location is the host cell membrane. Its function is as follows. Secreted, cytolytic toxin that forms pores in host membranes after proteolytic removal of a C-terminal propeptide, leading to destruction of the membrane permeability barrier and host cell death. The pores are formed by transmembrane beta-strands and are approximately 3 nm in diameter. In Aeromonas hydrophila, this protein is Aerolysin (aerA).